The primary structure comprises 379 residues: Cytochrome b (379 aa).

A run of 4 helical transmembrane segments spans residues 33-53, 77-98, 113-133, and 178-198; these read FGSL…FLAM, WFLR…YLHI, WNVG…GYVL, and FFTF…IHLL. His-83 and His-97 together coordinate heme b. His-182 and His-196 together coordinate heme b. His-201 is a binding site for a ubiquinone. Helical transmembrane passes span 226 to 246, 288 to 308, 320 to 340, and 347 to 367; these read YKDL…TLFS, LGGV…PITH, LTQI…WIGG, and FIII…VFAP.

This sequence belongs to the cytochrome b family. The cytochrome bc1 complex contains 3 respiratory subunits (MT-CYB, CYC1 and UQCRFS1), 2 core proteins (UQCRC1 and UQCRC2) and probably 6 low-molecular weight proteins. The cofactor is heme b.

It is found in the mitochondrion inner membrane. In terms of biological role, component of the ubiquinol-cytochrome c reductase complex (complex III or cytochrome b-c1 complex) that is part of the mitochondrial respiratory chain. The b-c1 complex mediates electron transfer from ubiquinol to cytochrome c. Contributes to the generation of a proton gradient across the mitochondrial membrane that is then used for ATP synthesis. In Amia calva (Bowfin), this protein is Cytochrome b (mt-cyb).